A 414-amino-acid chain; its full sequence is Enterobactin exporter EntS (414 aa).

Over 1–21 the chain is Cytoplasmic; it reads MNRQSWLLNLSLLKTHPAFRA. Residues 22-42 traverse the membrane as a helical segment; sequence VFLARFISIVSLGLLGVAVPV. The Periplasmic portion of the chain corresponds to 43 to 55; it reads QIQMMTHSTWQVG. The chain crosses the membrane as a helical span at residues 56 to 76; the sequence is LSVTLTGGAMFIGLMVGGVLA. At 77 to 83 the chain is on the cytoplasmic side; that stretch reads DRYERKK. The helical transmembrane segment at 84 to 104 threads the bilayer; the sequence is VILLARGTCGIGFIGLCVNAL. At 105–109 the chain is on the periplasmic side; it reads LPEPS. The helical transmembrane segment at 110–130 threads the bilayer; it reads LLAIYLLGLWDGFFASLGVTA. Over 131–156 the chain is Cytoplasmic; it reads LLAATPALVGRENLMQAGAITMLTVR. Residues 157 to 177 traverse the membrane as a helical segment; it reads LGSVISPMLGGILLASGGVAW. Residue N178 is a topological domain, periplasmic. The helical transmembrane segment at 179-199 threads the bilayer; that stretch reads YGLAAAGTFITLLPLLTLPRL. Residues 200 to 218 are Cytoplasmic-facing; sequence PVPPQPRENPFIALLAAFR. A helical transmembrane segment spans residues 219–239; that stretch reads FLLASPLIGGIALLGGLVTMA. The Periplasmic portion of the chain corresponds to 240–256; that stretch reads SAVRVLYPALAMSWQMS. A helical membrane pass occupies residues 257–277; sequence AAQIGLLYAAIPLGAAIGALT. The Cytoplasmic portion of the chain corresponds to 278–287; it reads SGQLAHSVRP. The helical transmembrane segment at 288 to 307 threads the bilayer; that stretch reads GLIMLVSTVGSFLAVGLFAI. At 308–313 the chain is on the periplasmic side; sequence MPVWIA. The chain crosses the membrane as a helical span at residues 314–336; sequence GVICLALFGWLSAISSLLQYTLL. At 337 to 356 the chain is on the cytoplasmic side; that stretch reads QTQTPENMLGRMNGLWTAQN. The helical transmembrane segment at 357 to 377 threads the bilayer; the sequence is VTGDAIGAALLGGLGAMMTPV. A378 is a topological domain (periplasmic). A helical transmembrane segment spans residues 379–399; sequence SASVSGFGLVIIGLLLLLVLG. The Cytoplasmic segment spans residues 400–414; sequence ELRRFRQTPPVSDAG.

The protein belongs to the major facilitator superfamily. EntS (TC 2.A.1.38) family.

Its subcellular location is the cell inner membrane. In terms of biological role, component of an export pathway for enterobactin. This chain is Enterobactin exporter EntS, found in Salmonella typhimurium (strain LT2 / SGSC1412 / ATCC 700720).